The chain runs to 520 residues: Alpha-1B adrenergic receptor (520 aa).

The Extracellular portion of the chain corresponds to Met1–Ala45. Asn10, Asn24, Asn29, and Asn34 each carry an N-linked (GlcNAc...) asparagine glycan. A helical transmembrane segment spans residues Ile46–Val70. Over Ala71–Phe83 the chain is Cytoplasmic. Residues Ile84–Leu105 traverse the membrane as a helical segment. The Extracellular segment spans residues Glu106–Arg115. A helical transmembrane segment spans residues Ile116–Ile141. Cys118 and Cys195 form a disulfide bridge. Over Asp142–Lys161 the chain is Cytoplasmic. Residues Ala162–Trp184 traverse the membrane as a helical segment. The Extracellular portion of the chain corresponds to Lys185–Pro201. Residues Phe202–Cys224 traverse the membrane as a helical segment. The Cytoplasmic portion of the chain corresponds to Arg225–Thr295. Thr264 carries the post-translational modification Phosphothreonine. A helical membrane pass occupies residues Leu296–Leu319. Residues Phe320 to Pro326 lie on the Extracellular side of the membrane. A helical transmembrane segment spans residues Asp327 to Ser351. Over Ser352–Phe520 the chain is Cytoplasmic. Cys365 carries S-palmitoyl cysteine lipidation. The short motif at Arg368–Arg380 is the Nuclear localization signal element. 2 disordered regions span residues Gly394 to Gly432 and Leu479 to Phe520.

It belongs to the G-protein coupled receptor 1 family. Adrenergic receptor subfamily. ADRA1B sub-subfamily. As to quaternary structure, homo- and heterooligomer. Heterooligomerizes with ADRA1B homooligomers in cardiac myocytes. Interacts with CAVIN4.

It localises to the nucleus membrane. It is found in the cell membrane. The protein localises to the cytoplasm. Its subcellular location is the membrane. The protein resides in the caveola. This alpha-adrenergic receptor mediates its action by association with G proteins that activate a phosphatidylinositol-calcium second messenger system. Its effect is mediated by G(q) and G(11) proteins. Nuclear ADRA1A-ADRA1B heterooligomers regulate phenylephrine (PE)-stimulated ERK signaling in cardiac myocytes. This chain is Alpha-1B adrenergic receptor (ADRA1B), found in Homo sapiens (Human).